Reading from the N-terminus, the 496-residue chain is Probable CtpA-like serine protease (496 aa).

A compositionally biased stretch (basic and acidic residues) spans 1–16; that stretch reads MDDKQHTSSSDDERAE. The disordered stretch occupies residues 1-27; sequence MDDKQHTSSSDDERAEIATSNQDQETN. Residues 18–27 show a composition bias toward polar residues; that stretch reads ATSNQDQETN. Residues 39 to 59 form a helical membrane-spanning segment; the sequence is FISILIGTILITAVITVVAYI. Residues 124 to 206 enclose the PDZ domain; it reads TKSFNEGVSG…TEVTLTVQRG (83 aa). Residues Ser-329, Asp-340, and Lys-354 each act as charge relay system in the active site.

Belongs to the peptidase S41A family.

It localises to the cell membrane. The chain is Probable CtpA-like serine protease from Staphylococcus aureus (strain COL).